The chain runs to 68 residues: Conotoxin Lp5.2 (68 aa).

Residues 1–19 (MRCVPVFIILLLLASPAAP) form the signal peptide. The propeptide occupies 20 to 54 (KSLETRIQNDLIRAGLTDADLKTEKGFLSGLLNVA).

The protein belongs to the conotoxin T superfamily. In terms of processing, contains 2 disulfide bonds that can be either 'C1-C3, C2-C4' or 'C1-C4, C2-C3', since these disulfide connectivities have been observed for conotoxins with cysteine framework V (for examples, see AC P0DQQ7 and AC P81755). Expressed by the venom duct.

Its subcellular location is the secreted. The sequence is that of Conotoxin Lp5.2 from Conus leopardus (Leopard cone).